A 366-amino-acid polypeptide reads, in one-letter code: Chorismate synthase (366 aa).

Residues R48 and R54 each contribute to the NADP(+) site. FMN-binding positions include 132–134, 244–245, G289, 304–308, and R330; these read RSS, NA, and KPTSS.

It belongs to the chorismate synthase family. As to quaternary structure, homotetramer. Requires FMNH2 as cofactor.

It carries out the reaction 5-O-(1-carboxyvinyl)-3-phosphoshikimate = chorismate + phosphate. Its pathway is metabolic intermediate biosynthesis; chorismate biosynthesis; chorismate from D-erythrose 4-phosphate and phosphoenolpyruvate: step 7/7. Catalyzes the anti-1,4-elimination of the C-3 phosphate and the C-6 proR hydrogen from 5-enolpyruvylshikimate-3-phosphate (EPSP) to yield chorismate, which is the branch point compound that serves as the starting substrate for the three terminal pathways of aromatic amino acid biosynthesis. This reaction introduces a second double bond into the aromatic ring system. The sequence is that of Chorismate synthase from Methylorubrum populi (strain ATCC BAA-705 / NCIMB 13946 / BJ001) (Methylobacterium populi).